The following is a 491-amino-acid chain: Glucose-6-phosphate 1-dehydrogenase (491 aa).

NADP(+)-binding positions include R50, 92–93 (DV), and K147. 4 residues coordinate substrate: H177, K181, E215, and D234. H239 functions as the Proton acceptor in the catalytic mechanism. Residues K339 and K344 each contribute to the substrate site.

This sequence belongs to the glucose-6-phosphate dehydrogenase family.

The catalysed reaction is D-glucose 6-phosphate + NADP(+) = 6-phospho-D-glucono-1,5-lactone + NADPH + H(+). The protein operates within carbohydrate degradation; pentose phosphate pathway; D-ribulose 5-phosphate from D-glucose 6-phosphate (oxidative stage): step 1/3. Functionally, catalyzes the oxidation of glucose 6-phosphate to 6-phosphogluconolactone. This Dickeya dadantii (strain 3937) (Erwinia chrysanthemi (strain 3937)) protein is Glucose-6-phosphate 1-dehydrogenase.